Reading from the N-terminus, the 204-residue chain is Methyl-CpG-binding domain protein 3-like 2B (204 aa).

The segment covering 126 to 137 (SLDRAGAERVRS) has biased composition (basic and acidic residues). The disordered stretch occupies residues 126 to 145 (SLDRAGAERVRSPLEPTPGR).

Belongs to the MBD3L family.

This Homo sapiens (Human) protein is Methyl-CpG-binding domain protein 3-like 2B.